Here is a 255-residue protein sequence, read N- to C-terminus: Na(+)-translocating NADH-quinone reductase subunit C (255 aa).

The helical transmembrane segment at Leu-11–Gly-31 threads the bilayer. An FMN phosphoryl threonine modification is found at Thr-223.

It belongs to the NqrC family. Composed of six subunits; NqrA, NqrB, NqrC, NqrD, NqrE and NqrF. It depends on FMN as a cofactor.

The protein resides in the cell inner membrane. The enzyme catalyses a ubiquinone + n Na(+)(in) + NADH + H(+) = a ubiquinol + n Na(+)(out) + NAD(+). Functionally, NQR complex catalyzes the reduction of ubiquinone-1 to ubiquinol by two successive reactions, coupled with the transport of Na(+) ions from the cytoplasm to the periplasm. NqrA to NqrE are probably involved in the second step, the conversion of ubisemiquinone to ubiquinol. In Vibrio vulnificus (strain CMCP6), this protein is Na(+)-translocating NADH-quinone reductase subunit C.